Consider the following 592-residue polypeptide: E3 ubiquitin-protein ligase RNF180 (592 aa).

Residues 1–564 lie on the Cytoplasmic side of the membrane; sequence MKRSKELITK…DSRGWWFDMD (564 aa). Position 230 is a phosphoserine (Ser230). The RING-type zinc finger occupies 432–474; that stretch reads CAVCLDVYFNPYMCYPCRHIFCEPCLRTLAKDNPSSTPCPLCR. The chain crosses the membrane as a helical span at residues 565 to 585; that stretch reads MVIIYIYSVNWVIGFIVFCFL. Residues 586-592 are Extracellular-facing; that stretch reads CYFFFPF.

As to quaternary structure, interacts with ZIC2.

The protein resides in the endoplasmic reticulum membrane. It localises to the nucleus envelope. It carries out the reaction S-ubiquitinyl-[E2 ubiquitin-conjugating enzyme]-L-cysteine + [acceptor protein]-L-lysine = [E2 ubiquitin-conjugating enzyme]-L-cysteine + N(6)-ubiquitinyl-[acceptor protein]-L-lysine.. It participates in protein modification; protein ubiquitination. Its function is as follows. E3 ubiquitin-protein ligase which promotes polyubiquitination and degradation by the proteasome pathway of ZIC2. This chain is E3 ubiquitin-protein ligase RNF180 (RNF180), found in Pongo abelii (Sumatran orangutan).